The primary structure comprises 346 residues: Putative F-box/kelch-repeat protein At1g27420 (346 aa).

One can recognise an F-box domain in the interval 9–56 (PIIPGLTDDVAELCVSKIPRSSFQITSQVCRRWRSFLRSQHFAAVRKL). 5 Kelch repeats span residues 62 to 109 (EFLC…VLDG), 111 to 167 (KIVF…EVNG), 168 to 215 (LLYV…AFSS), 217 to 257 (LYAV…VRNK), and 259 to 300 (YFMD…VWNN).

The sequence is that of Putative F-box/kelch-repeat protein At1g27420 from Arabidopsis thaliana (Mouse-ear cress).